We begin with the raw amino-acid sequence, 326 residues long: Metallophosphoesterase domain-containing protein 1 (326 aa).

The protein belongs to the UPF0046 family.

Its function is as follows. May have metallophosphoesterase activity (in vitro). This Mus musculus (Mouse) protein is Metallophosphoesterase domain-containing protein 1 (Mpped1).